The following is a 243-amino-acid chain: Adenosylcobinamide-GDP ribazoletransferase (243 aa).

5 helical membrane passes run 31 to 51 (LLFYPLVGVVFGTLLLGFNAL), 55 to 75 (APLLLHAALLLSAWVLLSGGL), 109 to 129 (IAVVTLVVVLLLKFAAIVALI), 135 to 155 (IGLLLAPLIGRSAMLALFLGT), and 188 to 208 (VVLAGWSGIAALLVCAVCFYW).

Belongs to the CobS family. Mg(2+) is required as a cofactor.

It localises to the cell inner membrane. The enzyme catalyses alpha-ribazole + adenosylcob(III)inamide-GDP = adenosylcob(III)alamin + GMP + H(+). It catalyses the reaction alpha-ribazole 5'-phosphate + adenosylcob(III)inamide-GDP = adenosylcob(III)alamin 5'-phosphate + GMP + H(+). It functions in the pathway cofactor biosynthesis; adenosylcobalamin biosynthesis; adenosylcobalamin from cob(II)yrinate a,c-diamide: step 7/7. In terms of biological role, joins adenosylcobinamide-GDP and alpha-ribazole to generate adenosylcobalamin (Ado-cobalamin). Also synthesizes adenosylcobalamin 5'-phosphate from adenosylcobinamide-GDP and alpha-ribazole 5'-phosphate. The sequence is that of Adenosylcobinamide-GDP ribazoletransferase from Pseudomonas syringae pv. tomato (strain ATCC BAA-871 / DC3000).